A 133-amino-acid polypeptide reads, in one-letter code: Small ribosomal subunit protein uS9 (133 aa).

Over residues 98–113 (RKPLKTEGHLSRDPRA) the composition is skewed to basic and acidic residues. Residues 98-133 (RKPLKTEGHLSRDPRAKERRKYGLKKARKAPQFSKR) form a disordered region. Over residues 114–133 (KERRKYGLKKARKAPQFSKR) the composition is skewed to basic residues.

Belongs to the universal ribosomal protein uS9 family.

This chain is Small ribosomal subunit protein uS9, found in Synechococcus sp. (strain CC9902).